The sequence spans 272 residues: 3-methyl-2-oxobutanoate hydroxymethyltransferase (272 aa).

Residues Asp-42 and Asp-86 each contribute to the Mg(2+) site. 3-methyl-2-oxobutanoate is bound by residues 42 to 43 (DS), Asp-86, and Lys-116. Glu-118 contributes to the Mg(2+) binding site. The Proton acceptor role is filled by Glu-185.

This sequence belongs to the PanB family. In terms of assembly, homodecamer; pentamer of dimers. Requires Mg(2+) as cofactor.

The protein resides in the cytoplasm. It carries out the reaction 3-methyl-2-oxobutanoate + (6R)-5,10-methylene-5,6,7,8-tetrahydrofolate + H2O = 2-dehydropantoate + (6S)-5,6,7,8-tetrahydrofolate. The protein operates within cofactor biosynthesis; (R)-pantothenate biosynthesis; (R)-pantoate from 3-methyl-2-oxobutanoate: step 1/2. Its function is as follows. Catalyzes the reversible reaction in which hydroxymethyl group from 5,10-methylenetetrahydrofolate is transferred onto alpha-ketoisovalerate to form ketopantoate. The chain is 3-methyl-2-oxobutanoate hydroxymethyltransferase from Prochlorococcus marinus (strain NATL1A).